The chain runs to 389 residues: Chalcone synthase 1A (389 aa).

The active site involves C164.

The protein belongs to the thiolase-like superfamily. Chalcone/stilbene synthases family.

The enzyme catalyses (E)-4-coumaroyl-CoA + 3 malonyl-CoA + 3 H(+) = 2',4,4',6'-tetrahydroxychalcone + 3 CO2 + 4 CoA. It functions in the pathway secondary metabolite biosynthesis; flavonoid biosynthesis. Its function is as follows. The primary product of this enzyme is 4,2',4',6'-tetrahydroxychalcone (also termed naringenin-chalcone or chalcone) which can under specific conditions spontaneously isomerize into naringenin. In Solanum tuberosum (Potato), this protein is Chalcone synthase 1A (CHS1A).